The sequence spans 363 residues: Ribosomal RNA large subunit methyltransferase M (363 aa).

S-adenosyl-L-methionine is bound by residues S190, 223–226 (CPGG), D242, D262, and D279. Catalysis depends on K308, which acts as the Proton acceptor.

Belongs to the class I-like SAM-binding methyltransferase superfamily. RNA methyltransferase RlmE family. RlmM subfamily. Monomer.

The protein resides in the cytoplasm. It catalyses the reaction cytidine(2498) in 23S rRNA + S-adenosyl-L-methionine = 2'-O-methylcytidine(2498) in 23S rRNA + S-adenosyl-L-homocysteine + H(+). Catalyzes the 2'-O-methylation at nucleotide C2498 in 23S rRNA. The chain is Ribosomal RNA large subunit methyltransferase M from Aliivibrio salmonicida (strain LFI1238) (Vibrio salmonicida (strain LFI1238)).